Here is a 1103-residue protein sequence, read N- to C-terminus: PH, RCC1 and FYVE domains-containing protein 1 (1103 aa).

Positions 22 to 123 (KKGTQLLKYG…IWIGGLKTLI (102 aa)) constitute a PH domain. Positions 144 to 233 (DASRELTSSS…SSSHGSAADD (90 aa)) are disordered. Composition is skewed to low complexity over residues 151–169 (SSSP…SSPG) and 217–231 (SVSS…GSAA). RCC1 repeat units follow at residues 237–298 (LGDV…FVTR), 299–351 (QGEI…AVTL), 353–406 (GELY…LITS), 407–458 (YGRL…AVVE), 471–522 (SGKL…GLTT), 524–574 (GQVF…ALTS), and 575–626 (RNEV…AICL). The FYVE-type zinc-finger motif lies at 632–694 (GAEQSQCSTC…VCDSCYVKLS (63 aa)). The Zn(2+) site is built by C638, C641, C654, C657, C662, C665, C686, and C689. Residues 783-818 (ATPKLAQAPSGISSRSVSPFSRRSSPPRSATPMPST) form a disordered region. The segment covering 791–818 (PSGISSRSVSPFSRRSSPPRSATPMPST) has biased composition (low complexity). A coiled-coil region spans residues 828–904 (ADNMKKTNEI…IAQLKDVAEK (77 aa)). The span at 962–979 (NLQSPKQTPRASERNSNA) shows a compositional bias: polar residues. The disordered stretch occupies residues 962–988 (NLQSPKQTPRASERNSNAYPADPRLSS). The BRX domain occupies 1023–1078 (AEWIEQYEPGVYITLVALHDGTRDLRRVRFSRRRFGEHQAETWWSENREKVYEKYN). A disordered region spans residues 1079–1103 (VRVSEKSTASQTHRDRDEEEEDIPH).

In terms of tissue distribution, mostly expressed in flowers, and, to a lower extent, in stems, leaves, siliques, seeds.

Binds to phosphatidic acid and to phosphoinositides such as PtdIns3P, PtdIns(3,4)P(2), PtdIns(3,4,5)P(3) and PtdIns(4,5)P(2). Catalyzes guanine nucleotide exchange on specific Rab proteins. This chain is PH, RCC1 and FYVE domains-containing protein 1, found in Arabidopsis thaliana (Mouse-ear cress).